We begin with the raw amino-acid sequence, 474 residues long: Phenylalanine--tRNA ligase alpha subunit (474 aa).

L-phenylalanine is bound by residues Thr317, Gln356–Glu358, and Tyr396. Glu398 provides a ligand contact to Mg(2+). Residue Phe421 coordinates L-phenylalanine.

Belongs to the class-II aminoacyl-tRNA synthetase family. Phe-tRNA synthetase alpha subunit type 2 subfamily. In terms of assembly, tetramer of two alpha and two beta subunits. Requires Mg(2+) as cofactor.

Its subcellular location is the cytoplasm. The catalysed reaction is tRNA(Phe) + L-phenylalanine + ATP = L-phenylalanyl-tRNA(Phe) + AMP + diphosphate + H(+). This is Phenylalanine--tRNA ligase alpha subunit from Methanocorpusculum labreanum (strain ATCC 43576 / DSM 4855 / Z).